Consider the following 605-residue polypeptide: Alpha-amylase (605 aa).

An N-terminal signal peptide occupies residues 1 to 33 (MGVRRSLAALLAALLGCATSLVALTVAASPAHA). Positions 130 and 189 each coordinate Ca(2+). The active-site Nucleophile is the Asp219. Position 223 (His223) interacts with Ca(2+). The Proton donor role is filled by Glu253. One can recognise a CBM20 domain in the interval 500-605 (GDDCTTVTAR…CSQNFYDSWR (106 aa)).

This sequence belongs to the glycosyl hydrolase 13 family. As to quaternary structure, monomer. Requires Ca(2+) as cofactor.

It catalyses the reaction Endohydrolysis of (1-&gt;4)-alpha-D-glucosidic linkages in polysaccharides containing three or more (1-&gt;4)-alpha-linked D-glucose units.. In Thermomonospora curvata, this protein is Alpha-amylase (tam).